A 1254-amino-acid polypeptide reads, in one-letter code: Histone-lysine N-methyltransferase eggless (1254 aa).

Disordered stretches follow at residues 24-209 (ALVE…EIPR) and 228-248 (PVPR…SKTT). Composition is skewed to basic and acidic residues over residues 40–57 (TPEK…KDLT) and 65–81 (KSQE…KDPE). The span at 112–125 (SVELLESPLKSPSS) shows a compositional bias: low complexity. The span at 136 to 162 (LEEKEKPGPAKELEPKESEPDSKESSK) shows a compositional bias: basic and acidic residues. A compositionally biased stretch (polar residues) spans 172–181 (ELISSPTSDD). Basic and acidic residues-rich tracts occupy residues 182–197 (SLAK…EHGQ) and 234–243 (AMQESKETQK). A coiled-coil region spans residues 391 to 416 (TILQAKIERLAKKFEEVDLQLAQVQG). Tudor domains are found at residues 535 to 607 (RLPI…SEKV) and 634 to 691 (QCTK…KETQ). The interval 734-760 (ARKSTSKSGSPASTAAPPTGSSSSSAV) is disordered. Residues 739–759 (SKSGSPASTAAPPTGSSSSSA) are compositionally biased toward low complexity. In terms of domain architecture, MBD spans 811–877 (LDSYSPLSKP…DNFDFTPDLR (67 aa)). One can recognise a Pre-SET domain in the interval 939 to 1011 (VCCDCEDDCS…NCLNRVVQHS (73 aa)). C941, C943, C947, C953, C955, C993, C997, C999, and C1003 together coordinate Zn(2+). Residues 1014–1229 (MKLQVFKTSN…SGTELTWNYN (216 aa)) enclose the SET domain. S-adenosyl-L-methionine-binding positions include 1024–1026 (RGW), D1062, and Y1064. The segment covering 1081–1090 (YESDVERADL) has biased composition (basic and acidic residues). The disordered stretch occupies residues 1081–1139 (YESDVERADLDHEDDNYGPDAEDDDDFRPNNYYQKKKEKLRSSRSNSSSTQNTELDSQE). The span at 1091–1106 (DHEDDNYGPDAEDDDD) shows a compositional bias: acidic residues. The segment covering 1123 to 1134 (SRSNSSSTQNTE) has biased composition (low complexity). S-adenosyl-L-methionine-binding positions include R1183 and 1186–1187 (NH). Zn(2+) contacts are provided by C1189, C1242, C1244, and C1249. The 17-residue stretch at 1238–1254 (KVLYCQCGAQNCRVRLL) folds into the Post-SET domain.

The protein belongs to the class V-like SAM-binding methyltransferase superfamily. Histone-lysine methyltransferase family. Suvar3-9 subfamily.

It is found in the nucleus. The protein localises to the chromosome. The catalysed reaction is L-lysyl(9)-[histone H3] + 3 S-adenosyl-L-methionine = N(6),N(6),N(6)-trimethyl-L-lysyl(9)-[histone H3] + 3 S-adenosyl-L-homocysteine + 3 H(+). In terms of biological role, histone methyltransferase that specifically trimethylates 'Lys-9' of histone H3 in ovary. H3 'Lys-9' trimethylation represents a specific tag for epigenetic transcriptional repression by recruiting Su(var)205/HP1 to methylated histones. Plays a central role during oogenesis. The polypeptide is Histone-lysine N-methyltransferase eggless (egg) (Drosophila pseudoobscura pseudoobscura (Fruit fly)).